The primary structure comprises 141 residues: Short-chain diamines transporter (141 aa).

Transmembrane regions (helical) follow at residues 16 to 36 (VILLVIIAIALSFIFDVPLEV), 39 to 59 (TLGIVMAVTSVFWNMIFNHFF), 76 to 96 (ILHAIGFEGGLMLVTIPMVAY), and 103 to 123 (WQAIVLDFGLTMCILVYTFIF).

It belongs to the proteobacterial antimicrobial compound efflux (PACE) (TC 2.A.117) family.

Its subcellular location is the cell inner membrane. Mediates the efflux of short-chain diamines when energized by an electrochemical gradient. Involved in resistance to the synthetic biocide chlorhexidine, a widely used antiseptic and disinfectant in both hospital and community settings. Interacts directly with chlorhexidine and mediates its efflux via an energy-dependent mechanism. The protein is Short-chain diamines transporter of Acinetobacter baylyi (strain ATCC 33305 / BD413 / ADP1).